The following is a 109-amino-acid chain: MSCLNLHVPKNPVGKYIPLVVLLQMYIIYVEPYYGLHYFESVRQFLGPKILYGTVYFLVICHSIESAIAFLLCLKKGLPFCSSMKWIVSTFIFGGPTLAMLNKQKKHIA.

The next 3 membrane-spanning stretches (helical) occupy residues 16-36 (YIPL…YYGL), 54-74 (TVYF…LLCL), and 80-100 (FCSS…TLAM).

It localises to the membrane. This is an uncharacterized protein from Schizosaccharomyces pombe (strain 972 / ATCC 24843) (Fission yeast).